The following is a 235-amino-acid chain: uncharacterized protein (235 aa).

This is an uncharacterized protein from Escherichia coli (strain K12).